The sequence spans 113 residues: Coat protein TP1 (113 aa).

Its subcellular location is the virion. This Thermoproteus tenax virus 1 (strain KRA1) (TTV1) protein is Coat protein TP1.